A 765-amino-acid chain; its full sequence is Leucine-rich repeat and calponin homology domain-containing protein 2 (765 aa).

Disordered stretches follow at residues M1–G39 and L55–T76. LRR repeat units follow at residues S89–L110, D112–F133, P135–L156, M158–L179, P180–L201, D203–L224, S226–P248, L249–L269, and H271–K292. Positions L316 to Q401 are disordered. A compositionally biased stretch (basic and acidic residues) spans S378–S388. The stretch at S438–D472 forms a coiled coil. Disordered regions lie at residues R498–E552 and K565–A628. Residues Q503 to S512 show a composition bias toward basic and acidic residues. Polar residues-rich tracts occupy residues S518–E529 and D584–S595. The region spanning L642 to P755 is the Calponin-homology (CH) domain.

Functionally, may play a role in the organization of the cytoskeleton. The sequence is that of Leucine-rich repeat and calponin homology domain-containing protein 2 (LRCH2) from Homo sapiens (Human).